The primary structure comprises 163 residues: MTNNDTTLQLSSVLNRECTRSRVHCQSKKRALEIISELAAKQLSLPPQVVFEAILTREKMGSTGIGNGIAIPHGKLEEDTLRAVGVFVQLETPIAFDAIDNQPVDLLFALLVPADQTKTHLHTLSLVAKRLADKTICRRLRAAQSDEELYQIITDTEGTPDEA.

The PTS EIIA type-2 domain maps to 12 to 156 (SVLNRECTRS…EELYQIITDT (145 aa)). Residue histidine 73 is the Tele-phosphohistidine intermediate of the active site.

It is found in the cytoplasm. Its function is as follows. Seems to have a role in regulating nitrogen assimilation. This Escherichia coli (strain K12) protein is Nitrogen regulatory protein (ptsN).